The following is a 321-amino-acid chain: Peroxidase 42 (321 aa).

Positions 1 to 29 (MATSSGSCLIISLLVVVVAAALSASTASA) are cleaved as a signal peptide. Residue Gln30 is modified to Pyrrolidone carboxylic acid. 4 disulfides stabilise this stretch: Cys40–Cys118, Cys73–Cys78, Cys124–Cys315, and Cys202–Cys227. His71 acts as the Proton acceptor in catalysis. Positions 72, 75, 77, 79, and 81 each coordinate Ca(2+). 2 N-linked (GlcNAc...) asparagine glycosylation sites follow: Asn85 and Asn96. Substrate is bound at residue Pro165. His195 lines the heme b pocket. Ca(2+) is bound at residue Thr196. Asn211 carries N-linked (GlcNAc...) asparagine glycosylation. 3 residues coordinate Ca(2+): Asp239, Thr242, and Gly247. Residue Asn270 is glycosylated (N-linked (GlcNAc...) asparagine).

It belongs to the peroxidase family. Classical plant (class III) peroxidase subfamily. Requires heme b as cofactor. Ca(2+) is required as a cofactor.

The protein localises to the secreted. The enzyme catalyses 2 a phenolic donor + H2O2 = 2 a phenolic radical donor + 2 H2O. Its function is as follows. Removal of H(2)O(2), oxidation of toxic reductants, biosynthesis and degradation of lignin, suberization, auxin catabolism, response to environmental stresses such as wounding, pathogen attack and oxidative stress. These functions might be dependent on each isozyme/isoform in each plant tissue. This Zea mays (Maize) protein is Peroxidase 42 (PER42).